The following is a 235-amino-acid chain: Serine protease SplA (235 aa).

Residues 1–35 (MNKNVMVKGLTALTILTSLGFAENISNQPHSIAKA) form the signal peptide. Catalysis depends on charge relay system residues His74, Asp113, and Ser189.

The protein belongs to the peptidase S1B family.

It localises to the secreted. The chain is Serine protease SplA (splA) from Staphylococcus aureus (strain Mu3 / ATCC 700698).